A 247-amino-acid chain; its full sequence is Cell division protein ZapD (247 aa).

Belongs to the ZapD family. As to quaternary structure, interacts with FtsZ.

The protein resides in the cytoplasm. Cell division factor that enhances FtsZ-ring assembly. Directly interacts with FtsZ and promotes bundling of FtsZ protofilaments, with a reduction in FtsZ GTPase activity. The chain is Cell division protein ZapD from Escherichia coli O139:H28 (strain E24377A / ETEC).